A 388-amino-acid polypeptide reads, in one-letter code: tRNA(Ile)-lysidine synthase (388 aa).

An ATP-binding site is contributed by 51 to 56 (SGGRDS).

The protein belongs to the tRNA(Ile)-lysidine synthase family.

The protein localises to the cytoplasm. It catalyses the reaction cytidine(34) in tRNA(Ile2) + L-lysine + ATP = lysidine(34) in tRNA(Ile2) + AMP + diphosphate + H(+). Its function is as follows. Ligates lysine onto the cytidine present at position 34 of the AUA codon-specific tRNA(Ile) that contains the anticodon CAU, in an ATP-dependent manner. Cytidine is converted to lysidine, thus changing the amino acid specificity of the tRNA from methionine to isoleucine. The chain is tRNA(Ile)-lysidine synthase from Bifidobacterium longum (strain DJO10A).